Consider the following 290-residue polypeptide: MEIAARDVKSLRDKTGAGMMECKRALQECAGDALCAEKYLKERGLAAIENRRGRATAEGVIVIKARHAEGAACGASAVAMVELVCETDFVAKNAEFIALAERIAQAVLEHAYTEVNQVLRDMVVDLATRVRENMSLTRLALLRAGSAGAGQYLSHYVHPDKKTGVVLSFSSDAPDVFLRSDVRAFAYDCCLHAAAYTPRYVRAEDVPAEYVREQREVFQAHVASLQKPAHVKESIVQGKLEKHLAEICFLKQPFVKDDKLSVEKKMAEVGARAGGALRFTQALIYQLGVQ.

An involved in Mg(2+) ion dislocation from EF-Tu region spans residues 87 to 90; the sequence is TDFV.

Belongs to the EF-Ts family.

It is found in the cytoplasm. Associates with the EF-Tu.GDP complex and induces the exchange of GDP to GTP. It remains bound to the aminoacyl-tRNA.EF-Tu.GTP complex up to the GTP hydrolysis stage on the ribosome. The sequence is that of Elongation factor Ts (tsf) from Treponema pallidum (strain Nichols).